A 506-amino-acid polypeptide reads, in one-letter code: Maturase K (506 aa).

Belongs to the intron maturase 2 family. MatK subfamily.

The protein localises to the plastid. It is found in the chloroplast. Its function is as follows. Usually encoded in the trnK tRNA gene intron. Probably assists in splicing its own and other chloroplast group II introns. The sequence is that of Maturase K from Olea europaea (Common olive).